The primary structure comprises 522 residues: MVLMILPIIGSVSVSEGLVAIVTLCLVYMLMKYKHTEIPEGLKRLPGPKPLPIIGNVLEVYNNPHLSLTAMSERYGSVFQIQIGMRPVVVLSGNETVRQALIKQGEDFAGRPDLYSFKFINDGKSLAFSTDKAGVWRARRKLAMSALRSFATLEGTTPEYSCALEEHVCKEGEYLVKQLTSVMDVSGSFDPFRHIVVSVANVICGMCFGRRYSHDDQELLGLVNMSDEFGQVVGSGNPADFIPILRYLPNRTMKRFMDINDRFNNFVQKIVSEHYESYDKDNIRDITDSLIDHCEDRKLDENANIQVSDEKIVGIVNDLFGAGFDTISTALSWAVVYLVAYPEIQERLHQELKEKVGMIRTPRLSDKINLPLLEAFILEIFRHSSFLPFTIPHCTIKDTSLNGYFIPKDTCVFINQWQVNHDPELWKEPSSFNPDRFLSADGTELNKLEGEKVLVFGMDKRRCIGEAIGRNEVYLFLAILLQRLRFQEKPGHPLDMTPEYGLTMKHKRCQLKASMRPWGQEE.

Phe229 is a substrate binding site. Cys463 serves as a coordination point for heme.

The protein belongs to the cytochrome P450 family. Requires heme as cofactor. Liver.

The protein resides in the endoplasmic reticulum membrane. It localises to the microsome membrane. The enzyme catalyses an organic molecule + reduced [NADPH--hemoprotein reductase] + O2 = an alcohol + oxidized [NADPH--hemoprotein reductase] + H2O + H(+). In terms of biological role, cytochromes P450 are a group of heme-thiolate monooxygenases. They oxidize a variety of structurally unrelated compounds, including steroids, fatty acids, and xenobiotics. This chain is Cytochrome P450 1A1 (cyp1a1), found in Oncorhynchus mykiss (Rainbow trout).